The chain runs to 188 residues: Dual specificity protein phosphatase 18 (188 aa).

The region spanning 19–160 (GLSQITKSLY…LIHYEFQLFG (142 aa)) is the Tyrosine-protein phosphatase domain. The Phosphocysteine intermediate role is filled by cysteine 104.

Belongs to the protein-tyrosine phosphatase family. Non-receptor class dual specificity subfamily. Widely expressed with highest levels in liver, brain, ovary and testis.

It localises to the cytoplasm. The protein localises to the nucleus. It is found in the mitochondrion inner membrane. It catalyses the reaction O-phospho-L-tyrosyl-[protein] + H2O = L-tyrosyl-[protein] + phosphate. It carries out the reaction O-phospho-L-seryl-[protein] + H2O = L-seryl-[protein] + phosphate. The catalysed reaction is O-phospho-L-threonyl-[protein] + H2O = L-threonyl-[protein] + phosphate. With respect to regulation, activated by manganese ions, inhibited by iodoacetic acid. In terms of biological role, can dephosphorylate single and diphosphorylated synthetic MAPK peptides, with preference for the phosphotyrosine and diphosphorylated forms over phosphothreonine. In vitro, dephosphorylates p-nitrophenyl phosphate (pNPP). The protein is Dual specificity protein phosphatase 18 (DUSP18) of Homo sapiens (Human).